The sequence spans 183 residues: Caltractin ICL1f (183 aa).

A compositionally biased stretch (low complexity) spans 1 to 19 (MARRGQQPPQQQQQAQPAQ). Positions 1–30 (MARRGQQPPQQQQQAQPAQKNQAGKFNPAE) are disordered. 4 consecutive EF-hand domains span residues 39 to 74 (EEVL…LGFE), 75 to 110 (AKNQ…RISE), 112 to 147 (DSKA…LGET), and 148 to 183 (MDDS…KTFA). Residues Asp-52, Asp-54, Thr-56, Ser-58, Glu-63, Asp-88, Asp-90, Ser-92, Gln-94, and Glu-99 each contribute to the Ca(2+) site.

This sequence belongs to the centrin family. In terms of assembly, monomer.

It localises to the cytoplasm. It is found in the cytoskeleton. Its function is as follows. Plays a fundamental role in microtubule organizing center structure and function. Component of the infraciliary lattice (ICL) and the ciliary basal bodies. The polypeptide is Caltractin ICL1f (Icl1f) (Paramecium tetraurelia).